A 702-amino-acid chain; its full sequence is Ribosomal RNA large subunit methyltransferase K/L (702 aa).

Residues 43–154 (LVYQSLMWSR…KETASIALDL (112 aa)) form the THUMP domain.

It belongs to the methyltransferase superfamily. RlmKL family.

The protein resides in the cytoplasm. It carries out the reaction guanosine(2445) in 23S rRNA + S-adenosyl-L-methionine = N(2)-methylguanosine(2445) in 23S rRNA + S-adenosyl-L-homocysteine + H(+). The catalysed reaction is guanosine(2069) in 23S rRNA + S-adenosyl-L-methionine = N(2)-methylguanosine(2069) in 23S rRNA + S-adenosyl-L-homocysteine + H(+). In terms of biological role, specifically methylates the guanine in position 2445 (m2G2445) and the guanine in position 2069 (m7G2069) of 23S rRNA. In Escherichia coli O157:H7, this protein is Ribosomal RNA large subunit methyltransferase K/L.